We begin with the raw amino-acid sequence, 893 residues long: Alanine--tRNA ligase (893 aa).

4 residues coordinate Zn(2+): H574, H578, C678, and H682.

It belongs to the class-II aminoacyl-tRNA synthetase family. Zn(2+) is required as a cofactor.

It is found in the cytoplasm. It catalyses the reaction tRNA(Ala) + L-alanine + ATP = L-alanyl-tRNA(Ala) + AMP + diphosphate. In terms of biological role, catalyzes the attachment of alanine to tRNA(Ala) in a two-step reaction: alanine is first activated by ATP to form Ala-AMP and then transferred to the acceptor end of tRNA(Ala). Also edits incorrectly charged Ser-tRNA(Ala) and Gly-tRNA(Ala) via its editing domain. The chain is Alanine--tRNA ligase from Bifidobacterium longum (strain NCC 2705).